Here is a 439-residue protein sequence, read N- to C-terminus: tRNA(Ile)-lysidine synthase (439 aa).

Residue 25–30 participates in ATP binding; sequence SGGLDS.

Belongs to the tRNA(Ile)-lysidine synthase family.

Its subcellular location is the cytoplasm. The catalysed reaction is cytidine(34) in tRNA(Ile2) + L-lysine + ATP = lysidine(34) in tRNA(Ile2) + AMP + diphosphate + H(+). In terms of biological role, ligates lysine onto the cytidine present at position 34 of the AUA codon-specific tRNA(Ile) that contains the anticodon CAU, in an ATP-dependent manner. Cytidine is converted to lysidine, thus changing the amino acid specificity of the tRNA from methionine to isoleucine. This Edwardsiella ictaluri (strain 93-146) protein is tRNA(Ile)-lysidine synthase.